Here is a 129-residue protein sequence, read N- to C-terminus: Histone H2A-IV (129 aa).

Belongs to the histone H2A family. In terms of assembly, the nucleosome is a histone octamer containing two molecules each of H2A, H2B, H3 and H4 assembled in one H3-H4 heterotetramer and two H2A-H2B heterodimers. The octamer wraps approximately 147 bp of DNA.

It is found in the nucleus. Its subcellular location is the chromosome. Functionally, core component of nucleosome. Nucleosomes wrap and compact DNA into chromatin, limiting DNA accessibility to the cellular machineries which require DNA as a template. Histones thereby play a central role in transcription regulation, DNA repair, DNA replication and chromosomal stability. DNA accessibility is regulated via a complex set of post-translational modifications of histones, also called histone code, and nucleosome remodeling. The protein is Histone H2A-IV of Volvox carteri (Green alga).